Reading from the N-terminus, the 419-residue chain is UDP-N-acetylglucosamine 1-carboxyvinyltransferase 2 (419 aa).

24-25 contributes to the phosphoenolpyruvate binding site; sequence KN. Residue Arg-94 coordinates UDP-N-acetyl-alpha-D-glucosamine. The Proton donor role is filled by Cys-118. At Cys-118 the chain carries 2-(S-cysteinyl)pyruvic acid O-phosphothioketal. Residues 123–127, Asp-307, and Ile-329 contribute to the UDP-N-acetyl-alpha-D-glucosamine site; that span reads RPIDQ.

It belongs to the EPSP synthase family. MurA subfamily.

It is found in the cytoplasm. The catalysed reaction is phosphoenolpyruvate + UDP-N-acetyl-alpha-D-glucosamine = UDP-N-acetyl-3-O-(1-carboxyvinyl)-alpha-D-glucosamine + phosphate. It participates in cell wall biogenesis; peptidoglycan biosynthesis. In terms of biological role, cell wall formation. Adds enolpyruvyl to UDP-N-acetylglucosamine. This Staphylococcus aureus (strain bovine RF122 / ET3-1) protein is UDP-N-acetylglucosamine 1-carboxyvinyltransferase 2.